The primary structure comprises 360 residues: Photosystem II protein D1 (360 aa).

The next 3 helical transmembrane spans lie at 29–46, 118–133, and 142–156; these read YIGWFGCLMFPTLLTATS, HFLLGVASYMGREWEL, and WIFVAFSAPVAAASA. A chlorophyll a-binding site is contributed by His-118. Tyr-126 is a binding site for pheophytin a. Positions 170 and 189 each coordinate [CaMn4O5] cluster. Residues 197–218 form a helical membrane-spanning segment; it reads FHMAGVAGVFGGSLFSAMHGSL. Chlorophyll a is bound at residue His-198. A quinone contacts are provided by residues His-215 and 264-265; that span reads SF. Fe cation is bound at residue His-215. His-272 serves as a coordination point for Fe cation. The helical transmembrane segment at 274–288 threads the bilayer; sequence FLALWPVLGIWLTAM. [CaMn4O5] cluster is bound by residues His-332, Glu-333, Asp-342, and Ala-344. A propeptide spanning residues 345–360 is cleaved from the precursor; the sequence is SGDVLPVAFTAPAVNA.

It belongs to the reaction center PufL/M/PsbA/D family. As to quaternary structure, PSII is composed of 1 copy each of membrane proteins PsbA, PsbB, PsbC, PsbD, PsbE, PsbF, PsbH, PsbI, PsbJ, PsbK, PsbL, PsbM, PsbT, PsbX, PsbY, PsbZ, Psb30/Ycf12, at least 3 peripheral proteins of the oxygen-evolving complex and a large number of cofactors. It forms dimeric complexes. The D1/D2 heterodimer binds P680, chlorophylls that are the primary electron donor of PSII, and subsequent electron acceptors. It shares a non-heme iron and each subunit binds pheophytin, quinone, additional chlorophylls, carotenoids and lipids. D1 provides most of the ligands for the Mn4-Ca-O5 cluster of the oxygen-evolving complex (OEC). There is also a Cl(-1) ion associated with D1 and D2, which is required for oxygen evolution. The PSII complex binds additional chlorophylls, carotenoids and specific lipids. serves as cofactor. In terms of processing, tyr-161 forms a radical intermediate that is referred to as redox-active TyrZ, YZ or Y-Z. Post-translationally, C-terminally processed by CTPA; processing is essential to allow assembly of the oxygen-evolving complex and thus photosynthetic growth.

It is found in the plastid. The protein localises to the chloroplast thylakoid membrane. The enzyme catalyses 2 a plastoquinone + 4 hnu + 2 H2O = 2 a plastoquinol + O2. Its function is as follows. Photosystem II (PSII) is a light-driven water:plastoquinone oxidoreductase that uses light energy to abstract electrons from H(2)O, generating O(2) and a proton gradient subsequently used for ATP formation. It consists of a core antenna complex that captures photons, and an electron transfer chain that converts photonic excitation into a charge separation. The D1/D2 (PsbA/PsbD) reaction center heterodimer binds P680, the primary electron donor of PSII as well as several subsequent electron acceptors. This chain is Photosystem II protein D1, found in Thalassiosira pseudonana (Marine diatom).